The following is a 142-amino-acid chain: Hemoglobin subunit alpha-A (142 aa).

The Globin domain maps to 2–142 (VLSAADKNNV…VGTVLTAKYR (141 aa)). His-59 lines the O2 pocket. His-88 is a heme b binding site.

Belongs to the globin family. Heterotetramer of two alpha chains and two beta chains. In terms of tissue distribution, red blood cells.

Its function is as follows. Involved in oxygen transport from the lung to the various peripheral tissues. This chain is Hemoglobin subunit alpha-A (HBAA), found in Meleagris gallopavo (Wild turkey).